The primary structure comprises 72 residues: Translation initiation factor IF-1 (72 aa).

The S1-like domain occupies 1–72 (MSKDDSIEFE…TKGRITYRMK (72 aa)).

The protein belongs to the IF-1 family. In terms of assembly, component of the 30S ribosomal translation pre-initiation complex which assembles on the 30S ribosome in the order IF-2 and IF-3, IF-1 and N-formylmethionyl-tRNA(fMet); mRNA recruitment can occur at any time during PIC assembly.

The protein resides in the cytoplasm. One of the essential components for the initiation of protein synthesis. Stabilizes the binding of IF-2 and IF-3 on the 30S subunit to which N-formylmethionyl-tRNA(fMet) subsequently binds. Helps modulate mRNA selection, yielding the 30S pre-initiation complex (PIC). Upon addition of the 50S ribosomal subunit IF-1, IF-2 and IF-3 are released leaving the mature 70S translation initiation complex. This chain is Translation initiation factor IF-1, found in Xanthomonas euvesicatoria pv. vesicatoria (strain 85-10) (Xanthomonas campestris pv. vesicatoria).